Reading from the N-terminus, the 779-residue chain is Protein WEAK CHLOROPLAST MOVEMENT UNDER BLUE LIGHT-like 1 (779 aa).

Residues 1-119 are disordered; sequence MEDLKTTDAL…NAVSPRPLYS (119 aa). The segment covering 79 to 88 has biased composition (polar residues); it reads DSPTTPSFVS. Phosphoserine is present on serine 139. 3 coiled-coil regions span residues 182-503, 532-587, and 657-715; these read RMKV…KQRE, KETR…ESRL, and AVSE…KWRE. Over residues 650 to 661 the composition is skewed to low complexity; it reads ANARVAAAVSEV. Disordered regions lie at residues 650-674 and 694-759; these read ANARVAAAVSEVGEAKETEKRSLEK and EKAE…NPVK. Basic and acidic residues-rich tracts occupy residues 662-674 and 694-718; these read GEAKETEKRSLEK and EKAEKAKEGKLGVEQELRKWREVSE. The span at 741-753 shows a compositional bias: polar residues; it reads TSVSNETETNPIP.

This sequence belongs to the WEB family.

In Arabidopsis thaliana (Mouse-ear cress), this protein is Protein WEAK CHLOROPLAST MOVEMENT UNDER BLUE LIGHT-like 1 (WEL1).